Reading from the N-terminus, the 210-residue chain is Somatotropin-1 (210 aa).

Residues 1 to 22 form the signal peptide; the sequence is MARALVLLSVVLVSLLVNQGRA. Residue H38 participates in Zn(2+) binding. C71 and C183 are disulfide-bonded. Residue E192 participates in Zn(2+) binding. C200 and C208 form a disulfide bridge.

This sequence belongs to the somatotropin/prolactin family.

The protein resides in the secreted. Growth hormone plays an important role in growth control and is involved in the regulation of several anabolic processes. Implicated as an osmoregulatory substance important for seawater adaptation. This Carassius auratus (Goldfish) protein is Somatotropin-1 (gh1).